A 1583-amino-acid polypeptide reads, in one-letter code: Mediator of RNA polymerase II transcription subunit 12 (1583 aa).

Disordered stretches follow at residues 1-117 (MIPH…SLSW) and 1481-1525 (SNIP…SGIP). Positions 66–79 (DTSEREPPSKRLRL) are enriched in basic and acidic residues. Composition is skewed to low complexity over residues 102–114 (TPST…KPSS) and 1490–1514 (PSPA…GSST).

Belongs to the Mediator complex subunit 12 family. As to quaternary structure, component of the srb8-11 complex, which itself associates with the Mediator complex.

The protein localises to the nucleus. Its function is as follows. Component of the srb8-11 complex. The srb8-11 complex is a regulatory module of the Mediator complex which is itself involved in regulation of basal and activated RNA polymerase II-dependent transcription. The srb8-11 complex may be involved in the transcriptional repression of a subset of genes regulated by Mediator. It may inhibit the association of the Mediator complex with RNA polymerase II to form the holoenzyme complex. The polypeptide is Mediator of RNA polymerase II transcription subunit 12 (srb8) (Aspergillus terreus (strain NIH 2624 / FGSC A1156)).